The primary structure comprises 360 residues: Phosphoserine aminotransferase (360 aa).

Arg42 contacts L-glutamate. Residues 76–77, Trp102, Thr153, Asp172, and Gln195 each bind pyridoxal 5'-phosphate; that span reads AR. Lys196 carries the N6-(pyridoxal phosphate)lysine modification. 237–238 is a binding site for pyridoxal 5'-phosphate; the sequence is NT.

Belongs to the class-V pyridoxal-phosphate-dependent aminotransferase family. SerC subfamily. Homodimer. Requires pyridoxal 5'-phosphate as cofactor.

The protein resides in the cytoplasm. It carries out the reaction O-phospho-L-serine + 2-oxoglutarate = 3-phosphooxypyruvate + L-glutamate. The catalysed reaction is 4-(phosphooxy)-L-threonine + 2-oxoglutarate = (R)-3-hydroxy-2-oxo-4-phosphooxybutanoate + L-glutamate. The protein operates within amino-acid biosynthesis; L-serine biosynthesis; L-serine from 3-phospho-D-glycerate: step 2/3. Its pathway is cofactor biosynthesis; pyridoxine 5'-phosphate biosynthesis; pyridoxine 5'-phosphate from D-erythrose 4-phosphate: step 3/5. Functionally, catalyzes the reversible conversion of 3-phosphohydroxypyruvate to phosphoserine and of 3-hydroxy-2-oxo-4-phosphonooxybutanoate to phosphohydroxythreonine. The protein is Phosphoserine aminotransferase of Aliivibrio fischeri (strain ATCC 700601 / ES114) (Vibrio fischeri).